The primary structure comprises 356 residues: Glutamine synthetase N-1 (356 aa).

The 81-residue stretch at Val19–Gly99 folds into the GS beta-grasp domain. Residues Lys106–Pro356 form the GS catalytic domain.

Belongs to the glutamine synthetase family. Homooctamer. In terms of tissue distribution, this is a nodule isozyme.

Its subcellular location is the cytoplasm. It carries out the reaction L-glutamate + NH4(+) + ATP = L-glutamine + ADP + phosphate + H(+). The polypeptide is Glutamine synthetase N-1 (Gln-gamma) (Phaseolus vulgaris (Kidney bean)).